The primary structure comprises 1488 residues: Indigoidine synthase (1488 aa).

An adenylation region spans residues 229 to 585 (KNRAQRHPEQ…GGDGVARGYL (357 aa)). Residues 1137-1212 (APRNPLEHQV…KLAAWLSRAR (76 aa)) form the Carrier domain. Serine 1172 carries the post-translational modification O-(pantetheine 4'-phosphoryl)serine. Residues 1230 to 1346 (PIYCWPGLGG…ERVAAMNRKA (117 aa)) form a thioesterase region.

This sequence belongs to the ATP-dependent AMP-binding enzyme family. The cofactor is pantetheine 4'-phosphate.

It carries out the reaction 2 FMN + 2 L-glutamine + 2 ATP + O2 = indigoidine + 2 FMNH2 + 2 AMP + 2 diphosphate + 2 H2O. The catalysed reaction is FMN + L-glutamine + ATP = 3-amino-1,5-dihydropyridine-2,6-dione + FMNH2 + AMP + diphosphate. The enzyme catalyses 2 3-amino-1,5-dihydropyridine-2,6-dione + O2 = indigoidine + 2 H2O. It functions in the pathway pigment biosynthesis. Its function is as follows. Nonribosomal peptide synthetase involved in the biosynthesis of the blue pigment indigoidine, which is implicated in pathogenicity and protection from oxidative stress. Catalyzes the synthesis of the blue pigment using L-Gln as a substrate. Two glutamine molecules are cyclized and oxidized to form indigoidine. The chain is Indigoidine synthase from Dickeya dadantii (strain 3937) (Erwinia chrysanthemi (strain 3937)).